We begin with the raw amino-acid sequence, 472 residues long: Squamosa promoter-binding-like protein 18 (472 aa).

A disordered region spans residues Ala89–Gly110. Residues Cys112–Pro189 form an SBP-type zinc finger. Cys115, Cys120, Cys137, His140, Cys156, Cys159, His163, and Cys175 together coordinate Zn(2+). Residues Lys172–Lys188 carry the Bipartite nuclear localization signal motif. Disordered stretches follow at residues Leu179–Pro218, Ser233–Phe261, and Ser358–His381. Positions Asp192–Ala209 are enriched in polar residues. Residues Ser252 to Phe261 are compositionally biased toward low complexity.

In terms of tissue distribution, expressed in young panicles.

Its subcellular location is the nucleus. In terms of biological role, trans-acting factor that binds specifically to the consensus nucleotide sequence 5'-TNCGTACAA-3'. May be involved in panicle development. This is Squamosa promoter-binding-like protein 18 (SPL18) from Oryza sativa subsp. japonica (Rice).